Here is a 201-residue protein sequence, read N- to C-terminus: 3-isopropylmalate dehydratase small subunit (201 aa).

It belongs to the LeuD family. LeuD type 1 subfamily. In terms of assembly, heterodimer of LeuC and LeuD.

It catalyses the reaction (2R,3S)-3-isopropylmalate = (2S)-2-isopropylmalate. It functions in the pathway amino-acid biosynthesis; L-leucine biosynthesis; L-leucine from 3-methyl-2-oxobutanoate: step 2/4. In terms of biological role, catalyzes the isomerization between 2-isopropylmalate and 3-isopropylmalate, via the formation of 2-isopropylmaleate. The polypeptide is 3-isopropylmalate dehydratase small subunit (Shewanella woodyi (strain ATCC 51908 / MS32)).